Consider the following 133-residue polypeptide: Probable nuclear transport factor 2 (133 aa).

The NTF2 domain occupies 10-128 (VAKAFIQHYY…YFIGNEIFRL (119 aa)).

It is found in the cytoplasm. Facilitates protein transport into the nucleus. Could be part of a multicomponent system of cytosolic factors that assemble at the pore complex during nuclear import. The chain is Probable nuclear transport factor 2 (ran-4) from Caenorhabditis elegans.